Consider the following 89-residue polypeptide: Small ribosomal subunit protein uS15 (89 aa).

Belongs to the universal ribosomal protein uS15 family. In terms of assembly, part of the 30S ribosomal subunit. Forms a bridge to the 50S subunit in the 70S ribosome, contacting the 23S rRNA.

One of the primary rRNA binding proteins, it binds directly to 16S rRNA where it helps nucleate assembly of the platform of the 30S subunit by binding and bridging several RNA helices of the 16S rRNA. In terms of biological role, forms an intersubunit bridge (bridge B4) with the 23S rRNA of the 50S subunit in the ribosome. This Roseobacter denitrificans (strain ATCC 33942 / OCh 114) (Erythrobacter sp. (strain OCh 114)) protein is Small ribosomal subunit protein uS15.